The chain runs to 99 residues: MSSTSAASAAGQGALPAYDTPLGITNPPIDELLERTSSKYALVIYSAKRARQINDYYNQLGDGILEYVGPLVEPGLQEKPLSIALREIHADLLEHTEGE.

The segment covering 1 to 10 (MSSTSAASAA) has biased composition (low complexity). The disordered stretch occupies residues 1–20 (MSSTSAASAAGQGALPAYDT).

It belongs to the RNA polymerase subunit omega family. As to quaternary structure, the RNAP catalytic core consists of 2 alpha, 1 beta, 1 beta' and 1 omega subunit. When a sigma factor is associated with the core the holoenzyme is formed, which can initiate transcription.

It catalyses the reaction RNA(n) + a ribonucleoside 5'-triphosphate = RNA(n+1) + diphosphate. Its function is as follows. Promotes RNA polymerase assembly. Latches the N- and C-terminal regions of the beta' subunit thereby facilitating its interaction with the beta and alpha subunits. The chain is DNA-directed RNA polymerase subunit omega from Rhodococcus erythropolis (strain PR4 / NBRC 100887).